Reading from the N-terminus, the 248-residue chain is MRAGQGGSLRLSVCSVIVQAPSRRALDAKARHAVRDDTILRQLKRDAAPRSLIATPQARQVADRFHLYADLRVAIEEQMSLSGRARGRALLPDKIIGNAQVDLIQDDPHVDATHRRRVRHGHRQSRQVVFETVHALRKKGLSCSAIARRTGYGRRSIAKWLTFETPPDRRKSVLKPTSPIKDGNRCGRHLYTISNSAVTSAVSRISSDFSQPGAAPRGRARTVRRRLLSYPINRLAMLSRCGIRRLAT.

This is an uncharacterized protein from Sinorhizobium fredii (strain NBRC 101917 / NGR234).